The sequence spans 344 residues: Phenylalanine--tRNA ligase alpha subunit (344 aa).

Glu256 lines the Mg(2+) pocket.

Belongs to the class-II aminoacyl-tRNA synthetase family. Phe-tRNA synthetase alpha subunit type 1 subfamily. Tetramer of two alpha and two beta subunits. Mg(2+) is required as a cofactor.

It localises to the cytoplasm. It catalyses the reaction tRNA(Phe) + L-phenylalanine + ATP = L-phenylalanyl-tRNA(Phe) + AMP + diphosphate + H(+). The polypeptide is Phenylalanine--tRNA ligase alpha subunit (Bacillus cereus (strain G9842)).